Consider the following 156-residue polypeptide: Ribonuclease pancreatic (156 aa).

The first 28 residues, 1-28, serve as a signal peptide directing secretion; the sequence is MALEKSLALLPLLVLVLLVLGWVQPSLG. The span at 33–43 shows a compositional bias: basic and acidic residues; it reads AQKFQRQHMDS. A disordered region spans residues 33 to 52; that stretch reads AQKFQRQHMDSDGSPSSNPT. Substrate-binding residues include lysine 35 and arginine 38. Histidine 40 functions as the Proton acceptor in the catalytic mechanism. 4 disulfide bridges follow: cysteine 54–cysteine 112, cysteine 68–cysteine 123, cysteine 86–cysteine 138, and cysteine 93–cysteine 100. Asparagine 62 is a glycosylation site (N-linked (GlcNAc...) asparagine). Substrate-binding positions include 69-73, lysine 94, and arginine 113; that span reads KPVNT. Asparagine 116 carries an N-linked (GlcNAc...) asparagine glycan. Catalysis depends on histidine 147, which acts as the Proton donor.

The protein belongs to the pancreatic ribonuclease family. In terms of assembly, monomer. Interacts with and forms tight 1:1 complexes with RNH1. Dimerization of two such complexes may occur. Interaction with RNH1 inhibits this protein.

Its subcellular location is the secreted. It catalyses the reaction an [RNA] containing cytidine + H2O = an [RNA]-3'-cytidine-3'-phosphate + a 5'-hydroxy-ribonucleotide-3'-[RNA].. The catalysed reaction is an [RNA] containing uridine + H2O = an [RNA]-3'-uridine-3'-phosphate + a 5'-hydroxy-ribonucleotide-3'-[RNA].. In terms of biological role, endonuclease that catalyzes the cleavage of RNA on the 3' side of pyrimidine nucleotides. Acts on single-stranded and double-stranded RNA. The polypeptide is Ribonuclease pancreatic (RNASE1) (Saguinus oedipus (Cotton-top tamarin)).